A 333-amino-acid polypeptide reads, in one-letter code: Geranylgeranyl pyrophosphate synthase olcC (333 aa).

Positions 61, 64, and 93 each coordinate isopentenyl diphosphate. Mg(2+) is bound by residues aspartate 100 and aspartate 104. Residue arginine 109 participates in dimethylallyl diphosphate binding. Arginine 110 serves as a coordination point for isopentenyl diphosphate. Dimethylallyl diphosphate is bound by residues lysine 187, threonine 188, and glutamine 221. Aspartate 224 is a binding site for Mg(2+). The dimethylallyl diphosphate site is built by asparagine 228, lysine 238, and lysine 248.

Belongs to the FPP/GGPP synthase family. The cofactor is Mg(2+).

The catalysed reaction is isopentenyl diphosphate + dimethylallyl diphosphate = (2E)-geranyl diphosphate + diphosphate. It catalyses the reaction isopentenyl diphosphate + (2E)-geranyl diphosphate = (2E,6E)-farnesyl diphosphate + diphosphate. The enzyme catalyses isopentenyl diphosphate + (2E,6E)-farnesyl diphosphate = (2E,6E,10E)-geranylgeranyl diphosphate + diphosphate. Its pathway is secondary metabolite biosynthesis; terpenoid biosynthesis. Functionally, geranylgeranyl pyrophosphate synthase; part of the gene cluster that mediates the biosynthesis of 15-deoxyoxalicine B. The first step of the pathway is the synthesis of nicotinyl-CoA from nicotinic acid by the nicotinic acid-CoA ligase olcI. Nicotinyl-CoA is then a substrate of polyketide synthase olcA to produce 4-hydroxy-6-(3-pyridinyl)-2H-pyran-2-one (HPPO) which is further prenylated by the polyprenyl transferase olcH to yield geranylgeranyl-HPPO. Geranylgeranyl pyrophosphate is provided by the cluster-specific geranylgeranyl pyrophosphate synthase olcC. The FAD-dependent monooxygenase olcE catalyzes the epoxidation of geranylgeranyl-HPPO and the terpene cyclase olcD catalyzes the cyclization of the terpenoid component, resulting in the formation of the tricyclic terpene moiety seen in predecaturin E. The cytochrome P450 monooxygenase then catalyzes the allylic oxidation of predecaturin E, which is followed by spirocylization with concomitant loss of one molecule of water to form decaturin E. Decaturin E is the substrate of the cytochrome P450 monooxygenase olcJ which hydroxylates it at the C-29 position to form decaturin F. The short-chain dehydrogenase/reductase olcF may catalyze the oxidation of decaturin F to generate the 29-hydroxyl-27-one intermediate, and subsequent hemiacetal formation probably leads to the formation of decaturin C. The dioxygenase olcK may be a peroxisomal enzyme that catalyzes the hydroxylation of decaturin C into decaturin A once decaturin C is shuttled into the peroxisome by the MFS transporter olcL. Finally the cytochrome P450 monooxygenase olcB catalyzes the oxidative rearrangement to yield 15-deoxyoxalicine B. In the absence of olcJ, decaturin E may be shunted to a pathway in which it is oxidized to a ketone, possibly by olcF, to form decaturin D, which undergoes further allylic oxidation to yield decaturin G. Moreover, in the absence of oclK or oclL, oclB can convert decaturin C into 15-deoxyoxalicine A. The sequence is that of Geranylgeranyl pyrophosphate synthase olcC from Penicillium canescens.